The following is a 625-amino-acid chain: Very-long-chain aldehyde decarbonylase CER1 (625 aa).

5 consecutive transmembrane segments (helical) span residues 45–65, 126–146, 177–197, 200–220, and 329–349; these read LGYFLVFPFLLFRILHNQVWI, GVLMAALIHTGPVEFLYYWLH, PFAEHIAYFILFAIPLLTTLL, TASIISFAGYIIYIDFMNNMG, and LLWPFTSLSMIFTLFYARLFV. Residues 138–272 enclose the Fatty acid hydroxylase domain; that stretch reads VEFLYYWLHK…MPLYDYIYGT (135 aa).

The protein belongs to the sterol desaturase family. In terms of assembly, homodimer. Interacts with CER3, CYTB5-B, CYTB5-C, CYTB5-D and CYTB5-E. Expressed in seedlings, stems, leaves, flowers, fruits and siliques. Not detected in roots, pollen and seeds. Expressed in trichomes, cotyledons, shoot apical meristem and leaf primordia. Preferentially associated with young leaves rather than mature leaves. Expressed in the epidermis of the stem and caulines leaves, in the carpels and the sepals.

It localises to the endoplasmic reticulum membrane. It carries out the reaction a long-chain fatty aldehyde + 2 NADPH + O2 + H(+) = a long-chain alkane + formate + 2 NADP(+) + H2O. Aldehyde decarbonylase involved in the conversion of aldehydes to alkanes. Core component of a very-long-chain alkane synthesis complex. Involved in epicuticular wax biosynthesis and pollen fertility. The protein is Very-long-chain aldehyde decarbonylase CER1 (CER1) of Arabidopsis thaliana (Mouse-ear cress).